A 243-amino-acid chain; its full sequence is MIDIHSHIVFDVDDGPKSREESKALLAESYRQGVRTIVSTSHRRKGMFETPEEKIAENFLQVREIAKEVASDLVIAYGAEIYYTPDVLDKLEKKRIPTLNDSRYALIEFSMNTPYRDIHSALSKILMLGITPVIAHIERYDALENNEKRVRELIDMGCYTQVNSSHVLKPKLFGERYKFMKKRAQYFLEQDLVHVIASDMHNLDGRPPHMAEAYDLVTQKYGEAKAQELFIDNPRKIVMDQLI.

Belongs to the metallo-dependent hydrolases superfamily. CpsB/CapC family. Requires Mn(2+) as cofactor.

The enzyme catalyses O-phospho-L-tyrosyl-[protein] + H2O = L-tyrosyl-[protein] + phosphate. It functions in the pathway capsule biogenesis; capsule polysaccharide biosynthesis. Its function is as follows. Dephosphorylates CpsD. Involved in the regulation of capsular polysaccharide biosynthesis. In Streptococcus pneumoniae serotype 4 (strain ATCC BAA-334 / TIGR4), this protein is Tyrosine-protein phosphatase CpsB (cpsB).